The sequence spans 519 residues: Bifunctional pantoate ligase/cytidylate kinase (519 aa).

The tract at residues 1–282 is pantoate--beta-alanine ligase; the sequence is MNLTILRTKT…CGNTRLIDHG (282 aa). An ATP-binding site is contributed by 30–37; sequence MGGLHQGH. Histidine 37 functions as the Proton donor in the catalytic mechanism. Glutamine 66 lines the (R)-pantoate pocket. Glutamine 66 serves as a coordination point for beta-alanine. 155–158 lines the ATP pocket; sequence GEKD. Residue glutamine 161 coordinates (R)-pantoate. ATP is bound at residue 192 to 195; sequence CSSR. The tract at residues 283–519 is cytidylate kinase; sequence FLMKRNPIVA…PQEVWPTNAT (237 aa).

The protein in the N-terminal section; belongs to the pantothenate synthetase family. This sequence in the C-terminal section; belongs to the cytidylate kinase family. Type 1 subfamily.

It is found in the cytoplasm. It catalyses the reaction (R)-pantoate + beta-alanine + ATP = (R)-pantothenate + AMP + diphosphate + H(+). The enzyme catalyses CMP + ATP = CDP + ADP. The catalysed reaction is dCMP + ATP = dCDP + ADP. Its pathway is cofactor biosynthesis; (R)-pantothenate biosynthesis; (R)-pantothenate from (R)-pantoate and beta-alanine: step 1/1. In terms of biological role, catalyzes the condensation of pantoate with beta-alanine in an ATP-dependent reaction via a pantoyl-adenylate intermediate. Functionally, catalyzes the transfer of a phosphate group from ATP to either CMP or dCMP to form CDP or dCDP and ADP, respectively. The chain is Bifunctional pantoate ligase/cytidylate kinase from Prochlorococcus marinus (strain SARG / CCMP1375 / SS120).